The chain runs to 114 residues: Nucleoid-associated protein NT01CX_0824 (114 aa).

Belongs to the YbaB/EbfC family. As to quaternary structure, homodimer.

The protein resides in the cytoplasm. It localises to the nucleoid. Binds to DNA and alters its conformation. May be involved in regulation of gene expression, nucleoid organization and DNA protection. This chain is Nucleoid-associated protein NT01CX_0824, found in Clostridium novyi (strain NT).